The sequence spans 119 residues: uncharacterized protein (119 aa).

This is an uncharacterized protein from Lactococcus lactis subsp. lactis (strain IL1403) (Streptococcus lactis).